The sequence spans 567 residues: Berberine bridge enzyme-like D-1 (567 aa).

Residues 1 to 33 form the signal peptide; the sequence is MKRNISMFLQLLLIILMMISFLFTSLLVPSVSA. A disulfide bond links cysteine 42 and cysteine 103. Asparagine 50 is a glycosylation site (N-linked (GlcNAc...) asparagine). Residues 81–257 form the FAD-binding PCMH-type domain; it reads SKPKPTVIIV…YAWKIRLLKV (177 aa). Histidine 118 is modified (pros-8alpha-FAD histidine). Asparagine 364 and asparagine 378 each carry an N-linked (GlcNAc...) asparagine glycan.

This sequence belongs to the oxygen-dependent FAD-linked oxidoreductase family. FAD is required as a cofactor. Mostly expressed in roots at low levels.

Its subcellular location is the vacuole. It functions in the pathway alkaloid biosynthesis; nicotine biosynthesis. Its function is as follows. Involved in the biosynthesis of pyridine alkaloid natural products, leading mainly to the production of anabasine, anatabine, nicotine and nornicotine, effective deterrents against herbivores with antiparasitic and pesticide properties (neurotoxins); nornicotine serves as the precursor in the synthesis of the carcinogen compound N'-nitrosonornicotine (NNN). Catalyzes a late oxidation step subsequent to the pyridine ring condensation reaction in the biosynthesis of alkaloids. The chain is Berberine bridge enzyme-like D-1 from Nicotiana tabacum (Common tobacco).